Here is a 412-residue protein sequence, read N- to C-terminus: BSD domain-containing protein 1 (412 aa).

A BSD domain is found at 145–197; that stretch reads WLSTFSLEERKAEISELLVSSPAIRALYTKMVPAAVAHAEFWQRYFYKVFQLE. Basic and acidic residues predominate over residues 208–217; the sequence is QRAEQTDHSE. Disordered regions lie at residues 208 to 227, 253 to 272, and 298 to 412; these read QRAEQTDHSESLGWEEEDEE, VTVADTPESSSPPQAVASLS, and ESVT…ENWE. Composition is skewed to polar residues over residues 259–272 and 298–308; these read PESSSPPQAVASLS and ESVTIRVTQPS. At S308 the chain carries Phosphoserine. A compositionally biased stretch (basic and acidic residues) spans 328-349; the sequence is PEERPAPREETAREDMAQDLRV. A compositionally biased stretch (polar residues) spans 353–372; sequence NSDSGKSTPSNNGKKGSSTD. 2 stretches are compositionally biased toward acidic residues: residues 373 to 390 and 400 to 412; these read VSEDWEKDFDLDMTEEEV and TEELEDEDWENWE.

The sequence is that of BSD domain-containing protein 1 (bsdc1) from Danio rerio (Zebrafish).